Consider the following 290-residue polypeptide: MSCYKVMPIAKNIDDELYELNKLLSEKEEFQLDREYQKEILEKERKFLEDLKTANEVFDKRTLMTLFSLLAGKHLTEYIGIVNSGKEAVVFKARKGKFYRAVKVYRVATCDFKTMSKYIQGDPRFHLRKSSRRQIIHAWVEKEFRNLRRASEIINAPKARLRRENVLVMDFVGYRGIPAPKLKDMQDLDWEKYFKIIKESMKKLYEEGELVHGDLSEYNILVKDDEPVFIDFSQSVITQHPLAHPLLIRDCINICNFFRRKRVDCNYKDLYKYITGKEIDPIDEAMIKQL.

In terms of domain architecture, Protein kinase spans 76 to 290 (TEYIGIVNSG…PIDEAMIKQL (215 aa)). ATP is bound by residues 82–90 (VNSGKEAVV) and Lys-103. Asp-214 serves as the catalytic Proton acceptor. The Mg(2+) site is built by Asn-219 and Asp-231. Catalysis depends on Asp-231, which acts as the 4-aspartylphosphate intermediate.

The protein belongs to the protein kinase superfamily. RIO-type Ser/Thr kinase family.

It catalyses the reaction L-seryl-[protein] + ATP = O-phospho-L-seryl-[protein] + ADP + H(+). It carries out the reaction L-threonyl-[protein] + ATP = O-phospho-L-threonyl-[protein] + ADP + H(+). The enzyme catalyses ATP + H2O = ADP + phosphate + H(+). Despite the protein kinase domain is proposed to act predominantly as an ATPase. The polypeptide is RIO-type serine/threonine-protein kinase Rio1 (rio1) (Methanocaldococcus jannaschii (strain ATCC 43067 / DSM 2661 / JAL-1 / JCM 10045 / NBRC 100440) (Methanococcus jannaschii)).